A 94-amino-acid polypeptide reads, in one-letter code: MARVTVEDAVNQIGNRFDMILVAARRARQIAVQGKDPMVEEENDKPTVIALREIELGLVTADTLDADERQTVREREAAEIAAVAAIAEGRNNVI.

This sequence belongs to the RNA polymerase subunit omega family. In terms of assembly, the RNAP catalytic core consists of 2 alpha, 1 beta, 1 beta' and 1 omega subunit. When a sigma factor is associated with the core the holoenzyme is formed, which can initiate transcription.

It carries out the reaction RNA(n) + a ribonucleoside 5'-triphosphate = RNA(n+1) + diphosphate. Its function is as follows. Promotes RNA polymerase assembly. Latches the N- and C-terminal regions of the beta' subunit thereby facilitating its interaction with the beta and alpha subunits. The chain is DNA-directed RNA polymerase subunit omega from Shewanella pealeana (strain ATCC 700345 / ANG-SQ1).